The sequence spans 238 residues: MYHLNQKALLLFSGGQDSGTCLGWALSNFSHIITIGFSYGQRHSVEMQCRTNIRNKISKLSKIWEQRLGEDYIFSLDIFSQLGETAITSELEIVFDKQGLPNTFVPGRNIFFLTIAAAFAWRNSIRHLIIGTCETDFSGYPDCQDNSIKATQLALSLGLGEDITIHTPLMWLTKAQTWELALHLGGSKFVDLIRNETHSCYLNDHTTSHEWGYGCGTCPACKLRKNGWETFLMKKRAN.

12-22 serves as a coordination point for ATP; the sequence is FSGGQDSGTCL. 4 residues coordinate Zn(2+): Cys200, Cys215, Cys218, and Cys221.

This sequence belongs to the QueC family. The cofactor is Zn(2+).

It catalyses the reaction 7-carboxy-7-deazaguanine + NH4(+) + ATP = 7-cyano-7-deazaguanine + ADP + phosphate + H2O + H(+). The protein operates within purine metabolism; 7-cyano-7-deazaguanine biosynthesis. In terms of biological role, catalyzes the ATP-dependent conversion of 7-carboxy-7-deazaguanine (CDG) to 7-cyano-7-deazaguanine (preQ(0)). This Lawsonia intracellularis (strain PHE/MN1-00) protein is 7-cyano-7-deazaguanine synthase.